The chain runs to 97 residues: Putative pterin-4-alpha-carbinolamine dehydratase (97 aa).

The protein belongs to the pterin-4-alpha-carbinolamine dehydratase family.

The catalysed reaction is (4aS,6R)-4a-hydroxy-L-erythro-5,6,7,8-tetrahydrobiopterin = (6R)-L-erythro-6,7-dihydrobiopterin + H2O. This is Putative pterin-4-alpha-carbinolamine dehydratase from Saccharolobus solfataricus (strain ATCC 35092 / DSM 1617 / JCM 11322 / P2) (Sulfolobus solfataricus).